Here is a 275-residue protein sequence, read N- to C-terminus: NH(3)-dependent NAD(+) synthetase (275 aa).

46 to 53 is an ATP binding site; sequence GISGGQDS. Asp52 provides a ligand contact to Mg(2+). Arg140 lines the deamido-NAD(+) pocket. Position 160 (Thr160) interacts with ATP. Glu165 contributes to the Mg(2+) binding site. Deamido-NAD(+) contacts are provided by Lys173 and Asp180. 2 residues coordinate ATP: Lys189 and Thr211. 260–261 contacts deamido-NAD(+); sequence HK.

This sequence belongs to the NAD synthetase family. As to quaternary structure, homodimer.

The catalysed reaction is deamido-NAD(+) + NH4(+) + ATP = AMP + diphosphate + NAD(+) + H(+). The protein operates within cofactor biosynthesis; NAD(+) biosynthesis; NAD(+) from deamido-NAD(+) (ammonia route): step 1/1. Its function is as follows. Catalyzes the ATP-dependent amidation of deamido-NAD to form NAD. Uses ammonia as a nitrogen source. The polypeptide is NH(3)-dependent NAD(+) synthetase (Shigella dysenteriae serotype 1 (strain Sd197)).